The primary structure comprises 403 residues: Phosphoglycerate kinase (403 aa).

Substrate-binding positions include 21 to 23 (DFN), R36, 59 to 62 (HLGR), R119, and R154. ATP is bound by residues K207, G299, E330, and 357–360 (GGDA).

The protein belongs to the phosphoglycerate kinase family. As to quaternary structure, monomer.

The protein resides in the cytoplasm. It catalyses the reaction (2R)-3-phosphoglycerate + ATP = (2R)-3-phospho-glyceroyl phosphate + ADP. It functions in the pathway carbohydrate degradation; glycolysis; pyruvate from D-glyceraldehyde 3-phosphate: step 2/5. The protein is Phosphoglycerate kinase of Chlamydia felis (strain Fe/C-56) (Chlamydophila felis).